The primary structure comprises 343 residues: MIHQSMTSNLSFYISSVSHLSSPLPSLSRLSLRCCSSLPAHDMETKPSQGLYPLHRCKTIHLVRHAQGIHNVEGEKNHKAYLSEDLFDAHLTPLGWQQVDNLHKHVNASGISNRIELVVVSPLLRTLQTAVGTFGGEGYKDGVNTPLLMTAGAGNSDRPAISRLNRPPFIAVESCREHLVCLLFYLLHDWHFLEMKTFAMFLVQGVHPCDRRSNITKYRELFPAIDFSLIETDEDVLWKPDIREEDKDIATRGVKFFNWLSTRKEKEIAVVTHSGFLYQTLNSFGNDCDPSVKNEISKKFVNCELRSFVLVDKCMSSSDPPMTNYPGTILTGEDASSDIADQK.

A chloroplast-targeting transit peptide spans 1-35; the sequence is MIHQSMTSNLSFYISSVSHLSSPLPSLSRLSLRCC. Catalysis depends on His65, which acts as the Tele-phosphohistidine intermediate. Catalysis depends on Glu177, which acts as the Proton donor/acceptor. The segment at 322 to 343 is disordered; that stretch reads MTNYPGTILTGEDASSDIADQK.

The protein belongs to the phosphoglycerate mutase family.

Its subcellular location is the plastid. It localises to the chloroplast. Its function is as follows. May play a role in carbohydrates metabolism. In Arabidopsis thaliana (Mouse-ear cress), this protein is Phosphoglycerate mutase-like protein 2.